The following is a 297-amino-acid chain: Probable porphobilinogen deaminase (297 aa).

At C233 the chain carries S-(dipyrrolylmethanemethyl)cysteine.

This sequence belongs to the HMBS family. The cofactor is dipyrromethane.

It catalyses the reaction 4 porphobilinogen + H2O = hydroxymethylbilane + 4 NH4(+). The protein operates within porphyrin-containing compound metabolism; protoporphyrin-IX biosynthesis; coproporphyrinogen-III from 5-aminolevulinate: step 2/4. Tetrapolymerization of the monopyrrole PBG into the hydroxymethylbilane pre-uroporphyrinogen in several discrete steps. The polypeptide is Probable porphobilinogen deaminase (Thermoplasma volcanium (strain ATCC 51530 / DSM 4299 / JCM 9571 / NBRC 15438 / GSS1)).